A 769-amino-acid chain; its full sequence is Elongation factor G, mitochondrial (769 aa).

The N-terminal 42 residues, 1-42 (MSKFLRGISSISSASLKARASNFGVFHGVCSARNLHQSRLCL), are a transit peptide targeting the mitochondrion. One can recognise a tr-type G domain in the interval 74-356 (TRLRNIGVSA…AVVDYLPQPN (283 aa)). Residues 83-90 (AHIDSGKT), 154-158 (DTPGH), and 208-211 (NKMD) contribute to the GTP site.

The protein belongs to the TRAFAC class translation factor GTPase superfamily. Classic translation factor GTPase family. EF-G/EF-2 subfamily.

The protein resides in the mitochondrion. Its pathway is protein biosynthesis; polypeptide chain elongation. Mitochondrial GTPase that catalyzes the GTP-dependent ribosomal translocation step during translation elongation. During this step, the ribosome changes from the pre-translocational (PRE) to the post-translocational (POST) state as the newly formed A-site-bound peptidyl-tRNA and P-site-bound deacylated tRNA move to the P and E sites, respectively. Catalyzes the coordinated movement of the two tRNA molecules, the mRNA and conformational changes in the ribosome. The polypeptide is Elongation factor G, mitochondrial (Debaryomyces hansenii (strain ATCC 36239 / CBS 767 / BCRC 21394 / JCM 1990 / NBRC 0083 / IGC 2968) (Yeast)).